A 226-amino-acid chain; its full sequence is Enolase-phosphatase E1 (226 aa).

The protein belongs to the HAD-like hydrolase superfamily. MasA/MtnC family. In terms of assembly, monomer. Mg(2+) is required as a cofactor.

The enzyme catalyses 5-methylsulfanyl-2,3-dioxopentyl phosphate + H2O = 1,2-dihydroxy-5-(methylsulfanyl)pent-1-en-3-one + phosphate. It functions in the pathway amino-acid biosynthesis; L-methionine biosynthesis via salvage pathway; L-methionine from S-methyl-5-thio-alpha-D-ribose 1-phosphate: step 3/6. Its pathway is amino-acid biosynthesis; L-methionine biosynthesis via salvage pathway; L-methionine from S-methyl-5-thio-alpha-D-ribose 1-phosphate: step 4/6. Bifunctional enzyme that catalyzes the enolization of 2,3-diketo-5-methylthiopentyl-1-phosphate (DK-MTP-1-P) into the intermediate 2-hydroxy-3-keto-5-methylthiopentenyl-1-phosphate (HK-MTPenyl-1-P), which is then dephosphorylated to form the acireductone 1,2-dihydroxy-3-keto-5-methylthiopentene (DHK-MTPene). The sequence is that of Enolase-phosphatase E1 from Shewanella sp. (strain MR-4).